The primary structure comprises 292 residues: MGSSCLPPGFRFHPTDEELIEYYLKRKVEGLEIELEVIPVIDLYSFDPWELPDKSFLPNRDMEWYFFCSRDKKYPNGFRTNRGTKAGYWKATGKDRKITSRSSSIIGYRKTLVFYKGRAPLGDRSNWIMHEYRLCDDDTSQGSQNLKGAFVLCRVAMKNEIKTNTKIRKIPSEQTIGSGESSGLSSRVTSPSRDETMPFHSFANPVSTETDSSNIWISPEFILDSSKDYPQIQDVASQCFQQDFDFPIIGNQNMEFPASTSLDQNMDEFMQNGYWTNYGYDQTGLFGYSDFS.

The NAC domain occupies 6–158 (LPPGFRFHPT…AFVLCRVAMK (153 aa)). A DNA-binding region spans residues 106–164 (IGYRKTLVFYKGRAPLGDRSNWIMHEYRLCDDDTSQGSQNLKGAFVLCRVAMKNEIKTN). Residues 171–199 (PSEQTIGSGESSGLSSRVTSPSRDETMPF) are disordered. Over residues 172 to 191 (SEQTIGSGESSGLSSRVTSP) the composition is skewed to polar residues.

In terms of assembly, interacts with ABF2 and ABF4. In terms of tissue distribution, expressed in roots, rosettes leaves, cauline leaves and stems.

The protein resides in the nucleus. In terms of biological role, transcriptional activator involved in the positive regulation of abscisic acid (ABA) responsive genes. Acts as a positive factor of ABA-mediated responses. Involved in the transcriptional activation of ABA-inducible genes in response to dehydration and osmotic stresses. Plays a positive role in both stomatal closure and water loss under dehydration stress conditions. Acts synergistically with ABF2 to activate the dehydration stress-response factor RD29A transcription. Binds to the consensus core cis-acting elements 5'-CGTA-3' and 5'-CACG-3' at the RD29A promoter. Involved in hypocotyl graft union formation. Required for the auxin-mediated promotion of vascular tissue proliferation during hypocotyl graft attachment. The sequence is that of NAC domain-containing protein 96 from Arabidopsis thaliana (Mouse-ear cress).